Consider the following 240-residue polypeptide: tRNA (guanine-N(1)-)-methyltransferase (240 aa).

S-adenosyl-L-methionine contacts are provided by residues Gly-110 and 130 to 135; that span reads IGDYVL.

The protein belongs to the RNA methyltransferase TrmD family. As to quaternary structure, homodimer.

It localises to the cytoplasm. It catalyses the reaction guanosine(37) in tRNA + S-adenosyl-L-methionine = N(1)-methylguanosine(37) in tRNA + S-adenosyl-L-homocysteine + H(+). Specifically methylates guanosine-37 in various tRNAs. This chain is tRNA (guanine-N(1)-)-methyltransferase, found in Macrococcus caseolyticus (strain JCSC5402) (Macrococcoides caseolyticum).